Here is a 112-residue protein sequence, read N- to C-terminus: Large ribosomal subunit protein uL22 (112 aa).

Belongs to the universal ribosomal protein uL22 family. Part of the 50S ribosomal subunit.

Functionally, this protein binds specifically to 23S rRNA; its binding is stimulated by other ribosomal proteins, e.g. L4, L17, and L20. It is important during the early stages of 50S assembly. It makes multiple contacts with different domains of the 23S rRNA in the assembled 50S subunit and ribosome. Its function is as follows. The globular domain of the protein is located near the polypeptide exit tunnel on the outside of the subunit, while an extended beta-hairpin is found that lines the wall of the exit tunnel in the center of the 70S ribosome. The chain is Large ribosomal subunit protein uL22 from Sulfurovum sp. (strain NBC37-1).